A 410-amino-acid chain; its full sequence is Glycylpeptide N-tetradecanoyltransferase (410 aa).

The tetradecanoyl-CoA site is built by Phe-30, Trp-31, Phe-162, Leu-163, Cys-164, Val-165, Ser-171, Arg-173, Leu-174, and Ala-175.

The protein belongs to the NMT family. In terms of assembly, heterodimer composed of NMT and AK2; AK2 myristoylation stabilizes the complex.

The protein resides in the cytoplasm. The catalysed reaction is N-terminal glycyl-[protein] + tetradecanoyl-CoA = N-tetradecanoylglycyl-[protein] + CoA + H(+). In terms of biological role, adds a myristoyl group to the N-terminal glycine residue of certain cellular proteins. Myristoylates adenylate kinase AK2. During the asexual blood stage, may myristoylate proteins such as ARO, CDPK1 and GAP45. Probably by mediating protein myristoylation, plays a role in the assembly of the inner membrane complex during the early stages of schizogony and in the formation of rhoptries in the late stages and thus merozoite egress. This is Glycylpeptide N-tetradecanoyltransferase from Plasmodium falciparum (isolate 3D7).